Here is a 280-residue protein sequence, read N- to C-terminus: Manganese transport system membrane protein MntC (280 aa).

Helical transmembrane passes span 16-36 (ALITSVTVGIVSGVIGSFIIL), 41-61 (LMGDAISHAVLPGVAISYMMG), 62-82 (MNFFIGAATFGIAAALGIGFV), 92-112 (TAIGIVFSAFFALGIILISFA), 137-157 (TIIIAIIVISLVALFYKEFLV), 168-188 (YGLNVKFLHYFLMLLLTLVTV), 193-213 (TVGIILVVAMLITPAATAYLL), 221-241 (IVLASTFGAVSAIIGLYFSYI), and 244-264 (LASGAAMVLVATIIFFIAFLF).

It belongs to the ABC-3 integral membrane protein family.

Its subcellular location is the cell membrane. Its function is as follows. This protein is probably a component of a manganese permease, a binding protein-dependent, ATP-driven transport system. The protein is Manganese transport system membrane protein MntC (mntC) of Listeria monocytogenes serovar 1/2a (strain ATCC BAA-679 / EGD-e).